The following is a 496-amino-acid chain: Glutamyl-tRNA(Gln) amidotransferase subunit A (496 aa).

Active-site charge relay system residues include lysine 79 and serine 159. Serine 183 acts as the Acyl-ester intermediate in catalysis.

This sequence belongs to the amidase family. GatA subfamily. In terms of assembly, heterotrimer of A, B and C subunits.

The enzyme catalyses L-glutamyl-tRNA(Gln) + L-glutamine + ATP + H2O = L-glutaminyl-tRNA(Gln) + L-glutamate + ADP + phosphate + H(+). In terms of biological role, allows the formation of correctly charged Gln-tRNA(Gln) through the transamidation of misacylated Glu-tRNA(Gln) in organisms which lack glutaminyl-tRNA synthetase. The reaction takes place in the presence of glutamine and ATP through an activated gamma-phospho-Glu-tRNA(Gln). In Ruegeria pomeroyi (strain ATCC 700808 / DSM 15171 / DSS-3) (Silicibacter pomeroyi), this protein is Glutamyl-tRNA(Gln) amidotransferase subunit A.